A 458-amino-acid chain; its full sequence is Adenylosuccinate synthetase (458 aa).

Residues 17-23 and 45-47 contribute to the GTP site; these read GDEGKGK and GHT. Residue D18 is the Proton acceptor of the active site. D18 and G45 together coordinate Mg(2+). IMP-binding positions include 18–21, 43–46, T137, R151, Q247, T262, and R330; these read DEGK and NAGH. The active-site Proton donor is the H46. 326 to 332 is a binding site for substrate; sequence VTTGRSR. Residues R332, 358 to 360, and 440 to 442 contribute to the GTP site; these read KLD and STS.

This sequence belongs to the adenylosuccinate synthetase family. In terms of assembly, homodimer. The cofactor is Mg(2+).

Its subcellular location is the cytoplasm. The catalysed reaction is IMP + L-aspartate + GTP = N(6)-(1,2-dicarboxyethyl)-AMP + GDP + phosphate + 2 H(+). Its pathway is purine metabolism; AMP biosynthesis via de novo pathway; AMP from IMP: step 1/2. Plays an important role in the de novo pathway of purine nucleotide biosynthesis. Catalyzes the first committed step in the biosynthesis of AMP from IMP. The sequence is that of Adenylosuccinate synthetase from Acidovorax sp. (strain JS42).